Here is a 382-residue protein sequence, read N- to C-terminus: MSLNIFWFLPTHGDGKYLGTSEGARAVDHGYLQQIAQAADRLGFGGVLIPTGRSCEDSWLVAASLIPVTQRLKFLVALRPGIISPTVAARQAATLDRLSNGRALFNLVTGGDPDELAGDGLHLNHQERYEASVEFTRIWRKVLEGENVDYDGKHIQVKGAKLLYPPIQQPRPSLYFGGSSEAAQDLAAEQVELYLTWGEPPAAVAEKIAQVREKAAAQGREVRFGIRLHVIVRETNEEAWAAAERLISHLDDDTISRAQASLARFDSVGQQRMAALHGGNRDNLEVSPNLWAGVGLVRGGAGTALVGDGPTVAARVKEYADLGIDTFIFSGYPHLEESYRVAELLFPHLDVQRPEQPKTGGYVSPFGEMVANDILPKSVSQS.

The protein belongs to the SsuD family.

It carries out the reaction an alkanesulfonate + FMNH2 + O2 = an aldehyde + FMN + sulfite + H2O + 2 H(+). In terms of biological role, catalyzes the desulfonation of aliphatic sulfonates. The chain is Alkanesulfonate monooxygenase from Pseudomonas putida (strain ATCC 700007 / DSM 6899 / JCM 31910 / BCRC 17059 / LMG 24140 / F1).